Here is a 109-residue protein sequence, read N- to C-terminus: Thiosulfate sulfurtransferase GlpE (109 aa).

One can recognise a Rhodanese domain in the interval 16–104 (REQGAVVVDI…WRTTYPAEIS (89 aa)). The active-site Cysteine persulfide intermediate is cysteine 64.

This sequence belongs to the GlpE family.

The protein resides in the cytoplasm. The catalysed reaction is thiosulfate + hydrogen cyanide = thiocyanate + sulfite + 2 H(+). It catalyses the reaction thiosulfate + [thioredoxin]-dithiol = [thioredoxin]-disulfide + hydrogen sulfide + sulfite + 2 H(+). Functionally, transferase that catalyzes the transfer of sulfur from thiosulfate to thiophilic acceptors such as cyanide or dithiols. May function in a CysM-independent thiosulfate assimilation pathway by catalyzing the conversion of thiosulfate to sulfite, which can then be used for L-cysteine biosynthesis. The chain is Thiosulfate sulfurtransferase GlpE from Pseudomonas fluorescens (strain SBW25).